We begin with the raw amino-acid sequence, 820 residues long: LPS-assembly protein LptD (820 aa).

The tract at residues 1–27 is disordered; it reads MDLSSLPDPLRPTHSRLPARRRDRAEP. The segment covering 13 to 22 has biased composition (basic residues); the sequence is THSRLPARRR.

The protein belongs to the LptD family. In terms of assembly, component of the lipopolysaccharide transport and assembly complex. Interacts with LptE and LptA.

Together with LptE, is involved in the assembly of lipopolysaccharide (LPS) at the surface of the outer membrane. This Paracidovorax citrulli (strain AAC00-1) (Acidovorax citrulli) protein is LPS-assembly protein LptD.